The sequence spans 171 residues: MGHPRKARKKYDTPPHPWNAERIKEENRLVAKYGLKNKKEVWKAETMVRRYRRDARYLLGMASEHTGKEREQLLGHLVRTGILNEGAKLEDVLDLTVEDVLRRRLQTLVHKRGLARTVKEARQMVIHGHIALDGRKIDAPGYIVKRGEEDKIGFYPSSPMKKQIEAAQDAE.

The 65-residue stretch at 103 to 167 (RRLQTLVHKR…SPMKKQIEAA (65 aa)) folds into the S4 RNA-binding domain.

This sequence belongs to the universal ribosomal protein uS4 family. In terms of assembly, part of the 30S ribosomal subunit. Contacts protein S5. The interaction surface between S4 and S5 is involved in control of translational fidelity.

Functionally, one of the primary rRNA binding proteins, it binds directly to 16S rRNA where it nucleates assembly of the body of the 30S subunit. Its function is as follows. With S5 and S12 plays an important role in translational accuracy. The polypeptide is Small ribosomal subunit protein uS4 (Methanothermobacter thermautotrophicus (strain ATCC 29096 / DSM 1053 / JCM 10044 / NBRC 100330 / Delta H) (Methanobacterium thermoautotrophicum)).